The sequence spans 851 residues: MFFTISTHKMSSIADRNDGSIFDGLVEEDDKDKAKRVSRNKSEKKRRDQFNVLIKELGSMLPGNARKMDKSTVLQKSIDFLRKHKEITAQSDASEIRQDWKPTFLSNEEFTQLMLEALDGFFLAIMTDGNIIYVSESITPLLEHLPSDLVDQSVFNFIPEGEHSEIYKILSSHLLESDSLTPEYLKSKNQLEFCCHMLRGTIDPKEQPTYEYVKFIGNFKCLNNVPNSAHNGFEGTIQRSHRPSYEDKVCFVATVRLATPQFIKEMCTVEEPNEEFTSRHSLEWKFLFLDHRAPPIIGYLPFEVLGTSGYDYYHVDDLDNLAKCHEHLMQYGKGKSCYYRFLTKGQQWIWLQTHYYITYHQWNSRPEFIVCTHTVVSYAEVRAERRRELGIEESLPEITGDKSQDSGSDNHINTVSLKEALERFDTSPTPSASSRSSRKSSHTAVSDHSSTPTKMTVDTSTPPRQSLSGHEKTAQRRSSLSSQSLSSQSLGQPVAQPTMSQPSTLQLQSGMSQPVFQFSAQLGAMQHLKDQLEQRTRMIEANIHRQQEELRKIQEQLQIVHGQGLQMFLQQSASGLNFGSVQLASGNSSNVQQLTPINMQGQVVQTNQTQSGMSTGHISAPHMIQQQSLQSTATQHNQQNVLSGHTQQSSLASQSQNTVSAPLYNTMVISQPTTGNVVQVPSSLPQNNNQNAAAVTTFTQDRQIRFSQGQQLVTKLVTAPVACGAVMVPSTMFMGQVVTAYPTFAAQQQQPQTLSITQQQQQSQQDQQQQQLTTAQQPAQQQLTQHPQQFLQTSRLLHGNQSAQLILSAAFPLQQSTFTQSHHQQHQSQQQQQLVRHRTDKMTDPSKAQPQ.

The short motif at 32–47 (DKAKRVSRNKSEKKRR) is the Nuclear localization signal element. In terms of domain architecture, bHLH spans 34–84 (AKRVSRNKSEKKRRDQFNVLIKELGSMLPGNARKMDKSTVLQKSIDFLRKH). 2 positions are modified to phosphoserine: serine 38 and serine 42. Residue lysine 67 forms a Glycyl lysine isopeptide (Lys-Gly) (interchain with G-Cter in SUMO1) linkage. PAS domains follow at residues 107–177 (NEEF…LLES) and 262–332 (FIKE…MQYG). One can recognise a PAC domain in the interval 336-379 (SCYYRFLTKGQQWIWLQTHYYITYHQWNSRPEFIVCTHTVVSYA). Serine 408 carries the post-translational modification Phosphoserine. The segment at 420 to 508 (ALERFDTSPT…MSQPSTLQLQ (89 aa)) is disordered. Phosphoserine; by GSK3-beta is present on serine 427. The span at 447 to 468 (DHSSTPTKMTVDTSTPPRQSLS) shows a compositional bias: polar residues. 2 positions are modified to phosphothreonine; by CDK5: threonine 451 and threonine 461. Over residues 476–490 (RRSSLSSQSLSSQSL) the composition is skewed to low complexity. Positions 495-508 (AQPTMSQPSTLQLQ) are enriched in polar residues. Residues 516–566 (FQFSAQLGAMQHLKDQLEQRTRMIEANIHRQQEELRKIQEQLQIVHGQGLQ) are implicated in the circadian rhythmicity. Disordered regions lie at residues 627 to 655 (QSLQ…ASQS) and 817 to 851 (TFTQ…AQPQ). A compositionally biased stretch (low complexity) spans 817–833 (TFTQSHHQQHQSQQQQQ). Residue lysine 847 forms a Glycyl lysine isopeptide (Lys-Gly) (interchain with G-Cter in SUMO1) linkage.

Component of the circadian clock oscillator which includes the CRY proteins, CLOCK or NPAS2, BMAL1 or BMAL2, CSNK1D and/or CSNK1E, TIMELESS and the PER proteins. Forms a heterodimer with BMAL1. The CLOCK-BMAL1 heterodimer is required for E-box-dependent transactivation, for CLOCK nuclear translocation and degradation, and for phosphorylation of both CLOCK and BMAL1. Interaction with PER and CRY proteins requires translocation to the nucleus. Interaction of the CLOCK-BMAL1 heterodimer with PER or CRY inhibits transcription activation. In terms of processing, ubiquitinated, leading to its proteasomal degradation. Post-translationally, O-glycosylated; contains O-GlcNAc. O-glycosylation by OGT prevents protein degradation by inhibiting ubiquitination. It also stabilizes the CLOCK-BMAL1 heterodimer thereby increasing CLOCK-BMAL1-mediated transcriptional activation of PER1/2/3 and CRY1/2. Phosphorylation is dependent on the CLOCK-BMAL1 heterodimer formation. Phosphorylation enhances the transcriptional activity, alters the subcellular localization and decreases the stability of the heterodimer by promoting its degradation. In terms of processing, sumoylation enhances its transcriptional activity and interaction with ESR1, resulting in up-regulation of ESR1 activity. Estrogen stimulates sumoylation. Desumoylation by SENP1 negatively regulates its transcriptional activity. Post-translationally, undergoes lysosome-mediated degradation in a time-dependent manner in the liver.

Its subcellular location is the cytoplasm. The protein resides in the nucleus. It localises to the cytosol. Its function is as follows. Transcriptional activator which forms a core component of the circadian clock. The circadian clock, an internal time-keeping system, regulates various physiological processes through the generation of approximately 24 hour circadian rhythms in gene expression, which are translated into rhythms in metabolism and behavior. It is derived from the Latin roots 'circa' (about) and 'diem' (day) and acts as an important regulator of a wide array of physiological functions including metabolism, sleep, body temperature, blood pressure, endocrine, immune, cardiovascular, and renal function. Consists of two major components: the central clock, residing in the suprachiasmatic nucleus (SCN) of the brain, and the peripheral clocks that are present in nearly every tissue and organ system. Both the central and peripheral clocks can be reset by environmental cues, also known as Zeitgebers (German for 'timegivers'). The predominant Zeitgeber for the central clock is light, which is sensed by retina and signals directly to the SCN. The central clock entrains the peripheral clocks through neuronal and hormonal signals, body temperature and feeding-related cues, aligning all clocks with the external light/dark cycle. Circadian rhythms allow an organism to achieve temporal homeostasis with its environment at the molecular level by regulating gene expression to create a peak of protein expression once every 24 hours to control when a particular physiological process is most active with respect to the solar day. Transcription and translation of core clock components (CLOCK, NPAS2, BMAL1, BMAL2, PER1, PER2, PER3, CRY1 and CRY2) plays a critical role in rhythm generation, whereas delays imposed by post-translational modifications (PTMs) are important for determining the period (tau) of the rhythms (tau refers to the period of a rhythm and is the length, in time, of one complete cycle). A diurnal rhythm is synchronized with the day/night cycle, while the ultradian and infradian rhythms have a period shorter and longer than 24 hours, respectively. Disruptions in the circadian rhythms contribute to the pathology of cardiovascular diseases, cancer, metabolic syndromes and aging. A transcription/translation feedback loop (TTFL) forms the core of the molecular circadian clock mechanism. Transcription factors, CLOCK or NPAS2 and BMAL1 or BMAL2, form the positive limb of the feedback loop, act in the form of a heterodimer and activate the transcription of core clock genes and clock-controlled genes (involved in key metabolic processes), harboring E-box elements (5'-CACGTG-3') within their promoters. The core clock genes: PER1/2/3 and CRY1/2 which are transcriptional repressors form the negative limb of the feedback loop and interact with the CLOCK|NPAS2-BMAL1|BMAL2 heterodimer inhibiting its activity and thereby negatively regulating their own expression. This heterodimer also activates nuclear receptors NR1D1/2 and RORA/B/G, which form a second feedback loop and which activate and repress BMAL1 transcription, respectively. The preferred binding motif for the CLOCK-BMAL1 heterodimer is 5'-CACGTGA-3', which contains a flanking adenine nucleotide at the 3-prime end of the canonical 6-nucleotide E-box sequence. CLOCK specifically binds to the half-site 5'-CAC-3', while BMAL1 binds to the half-site 5'-GTGA-3'. The sequence is that of Circadian locomoter output cycles protein kaput (CLOCK) from Tyto alba (Barn owl).